Here is a 256-residue protein sequence, read N- to C-terminus: Protein FixA (256 aa).

The protein belongs to the ETF beta-subunit/FixA family. In terms of assembly, heterodimer of FixA and FixB.

It functions in the pathway amine and polyamine metabolism; carnitine metabolism. Its function is as follows. Required for anaerobic carnitine reduction. May bring reductant to CaiA. The protein is Protein FixA of Escherichia coli O17:K52:H18 (strain UMN026 / ExPEC).